The following is a 341-amino-acid chain: MDYKKAGVDIEAGYKAVELMKKHIQGTMRSEVLTGIGGFSGAFSLTSFKDMEEPTLVSGTDGVGTKLKLAFILDKHDTIGIDCVAMCVNDIACAGGEPLFFLDYIACGKNEPEKIATIVSGVAEGCKQSNAALIGGETAEMPGFYPVEEYDLAGFAVGIVDRKKLITGDKLKHGDVLIGIASSGIHSNGYSLVRKVFRMEKEALNTYYESLSGTLGEVLLTPTKIYVKALNSLKTGNVEVKACSHITGGGFYENIPRMLREGVTAIVKKDSYVIPPIFHMLQKDGSIEEQMMYNTYNMGIGMMIAVDKADADKAVSLLSVAGETAYIVGEIQDGEKGICLC.

It belongs to the AIR synthase family.

The protein resides in the cytoplasm. The enzyme catalyses 2-formamido-N(1)-(5-O-phospho-beta-D-ribosyl)acetamidine + ATP = 5-amino-1-(5-phospho-beta-D-ribosyl)imidazole + ADP + phosphate + H(+). Its pathway is purine metabolism; IMP biosynthesis via de novo pathway; 5-amino-1-(5-phospho-D-ribosyl)imidazole from N(2)-formyl-N(1)-(5-phospho-D-ribosyl)glycinamide: step 2/2. The protein is Phosphoribosylformylglycinamidine cyclo-ligase of Lachnoclostridium phytofermentans (strain ATCC 700394 / DSM 18823 / ISDg) (Clostridium phytofermentans).